Here is a 368-residue protein sequence, read N- to C-terminus: uncharacterized protein (368 aa).

It belongs to the Gfo/Idh/MocA family.

This is an uncharacterized protein from Schizosaccharomyces pombe (strain 972 / ATCC 24843) (Fission yeast).